The sequence spans 170 residues: Shikimate kinase (170 aa).

11 to 16 (LSGKST) is an ATP binding site. A Mg(2+)-binding site is contributed by Ser15. Positions 33, 57, and 79 each coordinate substrate. Arg119 provides a ligand contact to ATP. Residue Arg137 coordinates substrate.

It belongs to the shikimate kinase family. As to quaternary structure, monomer. Mg(2+) serves as cofactor.

The protein localises to the cytoplasm. The catalysed reaction is shikimate + ATP = 3-phosphoshikimate + ADP + H(+). It participates in metabolic intermediate biosynthesis; chorismate biosynthesis; chorismate from D-erythrose 4-phosphate and phosphoenolpyruvate: step 5/7. Functionally, catalyzes the specific phosphorylation of the 3-hydroxyl group of shikimic acid using ATP as a cosubstrate. This is Shikimate kinase from Clostridium botulinum (strain 657 / Type Ba4).